The sequence spans 537 residues: Membrane protein insertase YidC (537 aa).

The next 4 helical transmembrane spans lie at 5 to 25, 353 to 373, 418 to 438, and 495 to 515; these read LIIAVLLSIGVLYAYSFIFPT, GNYGIAIIIITFILKLVFFPL, VNPLGGCLPMVVQIPVFFGLY, and MLMLPIVFTFMFLNFPSGLVI.

Belongs to the OXA1/ALB3/YidC family. Type 1 subfamily. Interacts with the Sec translocase complex via SecD. Specifically interacts with transmembrane segments of nascent integral membrane proteins during membrane integration.

It localises to the cell inner membrane. Its function is as follows. Required for the insertion and/or proper folding and/or complex formation of integral membrane proteins into the membrane. Involved in integration of membrane proteins that insert both dependently and independently of the Sec translocase complex, as well as at least some lipoproteins. Aids folding of multispanning membrane proteins. The chain is Membrane protein insertase YidC from Citrifermentans bemidjiense (strain ATCC BAA-1014 / DSM 16622 / JCM 12645 / Bem) (Geobacter bemidjiensis).